The sequence spans 1159 residues: ATP-dependent helicase/deoxyribonuclease subunit B (1159 aa).

The region spanning 1–275 (MEFNTYIGRA…TYFNTFYRYN (275 aa)) is the UvrD-like helicase ATP-binding domain. 8–15 (GRAGTGKS) serves as a coordination point for ATP. Residues 269-583 (NTFYRYNNDD…SIGTMDLAKV (315 aa)) enclose the UvrD-like helicase C-terminal domain. Positions 784, 1112, 1115, and 1121 each coordinate [4Fe-4S] cluster.

It belongs to the helicase family. AddB/RexB type 1 subfamily. As to quaternary structure, heterodimer of AddA and AddB. The cofactor is Mg(2+). Requires [4Fe-4S] cluster as cofactor.

In terms of biological role, the heterodimer acts as both an ATP-dependent DNA helicase and an ATP-dependent, dual-direction single-stranded exonuclease. Recognizes the chi site generating a DNA molecule suitable for the initiation of homologous recombination. The AddB subunit has 5' -&gt; 3' nuclease activity but not helicase activity. In Staphylococcus epidermidis (strain ATCC 35984 / DSM 28319 / BCRC 17069 / CCUG 31568 / BM 3577 / RP62A), this protein is ATP-dependent helicase/deoxyribonuclease subunit B.